We begin with the raw amino-acid sequence, 53 residues long: uncharacterized protein (53 aa).

A helical membrane pass occupies residues 24–44 (LMTFIAVNAVLSLILIRAVIL).

The protein resides in the membrane. This is an uncharacterized protein from Methanocaldococcus jannaschii (strain ATCC 43067 / DSM 2661 / JAL-1 / JCM 10045 / NBRC 100440) (Methanococcus jannaschii).